The sequence spans 553 residues: MKYIFVTGGVVSSLGKGVASASLGALLRARGYKVTAVKIDPYINIDAGTMRPYEHGEVFVTASGAETDLDIGNYERFLDLDIPPGSNITTGQVYLEVIRKERAGDYLSQTVQVIPHVTDEIKRRIRTAGENAGAEIVLIEVGGTVGDIESLPFLEAIRQFKFDEGDENVLYIHLTLVPYLGTSNEFKTKPTQHSVAELRSVGISPDIVMVRSKEKLPPEITRKIALFTSVRENRVFSSYDVGHVYELPLALEEQGLGKAVEDLLGLERTHPNLGVWQNAVRTLKHPNHEVTIAIAGKYTEMPDAYLSLLESLTHAGIANDARVNIKWVNAEELAEGDLETQLGDADGILVPGGFGIRGIEGKIKAAEYARTHNVPYLGICLGMQIAVIEYARHVAGLTGANSAEFDPYAPHKVIDLMPEQLEVEGLGGTMRLGDWPMELRAGTKIAELYGVPQGGTVRERHRHRYEVNPAYVGQLQDAGLVISGVTPGVQGRGAGLVESIEIPGHPFFVALQAHPEFKSRPMRPSPPFAGFVAAALQSGPSSAASGQTVAAEA.

Residues 1–266 form an amidoligase domain region; it reads MKYIFVTGGV…GKAVEDLLGL (266 aa). Residue serine 12 participates in CTP binding. UTP is bound at residue serine 12. 13-18 lines the ATP pocket; that stretch reads SLGKGV. Residue tyrosine 53 participates in L-glutamine binding. Residue aspartate 70 participates in ATP binding. Mg(2+) is bound by residues aspartate 70 and glutamate 140. CTP is bound by residues 147 to 149, 187 to 192, and lysine 223; these read DIE and KTKPTQ. UTP is bound by residues 187–192 and lysine 223; that span reads KTKPTQ. The Glutamine amidotransferase type-1 domain maps to 291–541; that stretch reads TIAIAGKYTE…VAAALQSGPS (251 aa). Glycine 353 is an L-glutamine binding site. The active-site Nucleophile; for glutamine hydrolysis is cysteine 380. Residues 381-384, glutamate 404, and arginine 464 each bind L-glutamine; that span reads LGMQ. Residues histidine 514 and glutamate 516 contribute to the active site.

It belongs to the CTP synthase family. As to quaternary structure, homotetramer.

The catalysed reaction is UTP + L-glutamine + ATP + H2O = CTP + L-glutamate + ADP + phosphate + 2 H(+). The enzyme catalyses L-glutamine + H2O = L-glutamate + NH4(+). It carries out the reaction UTP + NH4(+) + ATP = CTP + ADP + phosphate + 2 H(+). The protein operates within pyrimidine metabolism; CTP biosynthesis via de novo pathway; CTP from UDP: step 2/2. Its activity is regulated as follows. Allosterically activated by GTP, when glutamine is the substrate; GTP has no effect on the reaction when ammonia is the substrate. The allosteric effector GTP functions by stabilizing the protein conformation that binds the tetrahedral intermediate(s) formed during glutamine hydrolysis. Inhibited by the product CTP, via allosteric rather than competitive inhibition. Functionally, catalyzes the ATP-dependent amination of UTP to CTP with either L-glutamine or ammonia as the source of nitrogen. Regulates intracellular CTP levels through interactions with the four ribonucleotide triphosphates. In Deinococcus geothermalis (strain DSM 11300 / CIP 105573 / AG-3a), this protein is CTP synthase.